A 162-amino-acid polypeptide reads, in one-letter code: Large ribosomal subunit protein uL15 (162 aa).

Positions 1 to 41 (MKLSDIADNAGSRKKRMRVGRGIGSGKGKTAGRGGKGQTAR) are disordered. Gly residues predominate over residues 21–37 (RGIGSGKGKTAGRGGKG).

It belongs to the universal ribosomal protein uL15 family. In terms of assembly, part of the 50S ribosomal subunit.

Binds to the 23S rRNA. This chain is Large ribosomal subunit protein uL15, found in Rhodopseudomonas palustris (strain BisB18).